The following is a 116-amino-acid chain: Thioredoxin H-type (116 aa).

A Thioredoxin domain is found at 2-115; it reads AEEAQVIACH…HKIAVHAPIT (114 aa). Active-site nucleophile residues include cysteine 39 and cysteine 42. Cysteine 39 and cysteine 42 are joined by a disulfide.

This sequence belongs to the thioredoxin family. Plant H-type subfamily.

It localises to the cytoplasm. Functionally, participates in various redox reactions through the reversible oxidation of the active center dithiol to a disulfide. The H form is known to activate a number of cytosolic enzymes. The chain is Thioredoxin H-type from Fagopyrum esculentum (Common buckwheat).